Reading from the N-terminus, the 421-residue chain is Synaptotagmin-12 (421 aa).

Residues 1–18 (MAVDVTEYHLSVIKSPPG) lie on the Vesicular side of the membrane. The chain crosses the membrane as a helical span at residues 19-39 (WEVGVYAAGALALLGIAAVSL). Over 40-421 (WKLWTSGSFP…VSMWHPVRRN (382 aa)) the chain is Cytoplasmic. The residue at position 97 (serine 97) is a Phosphoserine; by PKA. A phosphoserine mark is found at serine 99 and serine 214. C2 domains lie at 152–272 (TLGQ…SGWL) and 283–416 (AVGE…SMWH).

Belongs to the synaptotagmin family. Homodimer. Can also form heterodimers. Interacts with SYT1. In terms of processing, phosphorylation of Ser-97 is required for mossy-fiber long-term potentiation. As to expression, expressed in the brain, specifically in neurons of the cerebellum, cortex, hippocampus, olfactory bulb, brainstem and spinal cord (at protein level).

It localises to the cytoplasmic vesicle. The protein resides in the secretory vesicle. The protein localises to the synaptic vesicle membrane. Functionally, synaptic vesicle phosphoprotein that enhances spontaneous neurotransmitter release but does not effect induced neurotransmitter release. Unlike other synaptotagmins, it does not bind Ca(2+) or phospholipids. Essential for mossy-fiber long-term potentiation in the hippocampus. The protein is Synaptotagmin-12 of Rattus norvegicus (Rat).